The following is a 212-amino-acid chain: Deoxyribose-phosphate aldolase (212 aa).

Residue Asp89 is the Proton donor/acceptor of the active site. The active-site Schiff-base intermediate with acetaldehyde is the Lys151. Catalysis depends on Lys180, which acts as the Proton donor/acceptor.

The protein belongs to the DeoC/FbaB aldolase family. DeoC type 1 subfamily.

It is found in the cytoplasm. The enzyme catalyses 2-deoxy-D-ribose 5-phosphate = D-glyceraldehyde 3-phosphate + acetaldehyde. It participates in carbohydrate degradation; 2-deoxy-D-ribose 1-phosphate degradation; D-glyceraldehyde 3-phosphate and acetaldehyde from 2-deoxy-alpha-D-ribose 1-phosphate: step 2/2. Catalyzes a reversible aldol reaction between acetaldehyde and D-glyceraldehyde 3-phosphate to generate 2-deoxy-D-ribose 5-phosphate. The sequence is that of Deoxyribose-phosphate aldolase from Clostridium botulinum (strain Loch Maree / Type A3).